The following is a 475-amino-acid chain: Chromosomal replication initiator protein DnaA (475 aa).

The interval methionine 1–aspartate 73 is domain I, interacts with DnaA modulators. Residues aspartate 73 to serine 131 are domain II. The segment at proline 132 to serine 354 is domain III, AAA+ region. ATP contacts are provided by glycine 179, glycine 181, lysine 182, and threonine 183. The tract at residues lysine 355–glutamate 475 is domain IV, binds dsDNA.

It belongs to the DnaA family. In terms of assembly, oligomerizes as a right-handed, spiral filament on DNA at oriC.

It is found in the cytoplasm. Its function is as follows. Plays an essential role in the initiation and regulation of chromosomal replication. ATP-DnaA binds to the origin of replication (oriC) to initiate formation of the DNA replication initiation complex once per cell cycle. Binds the DnaA box (a 9 base pair repeat at the origin) and separates the double-stranded (ds)DNA. Forms a right-handed helical filament on oriC DNA; dsDNA binds to the exterior of the filament while single-stranded (ss)DNA is stabiized in the filament's interior. The ATP-DnaA-oriC complex binds and stabilizes one strand of the AT-rich DNA unwinding element (DUE), permitting loading of DNA polymerase. After initiation quickly degrades to an ADP-DnaA complex that is not apt for DNA replication. Binds acidic phospholipids. The chain is Chromosomal replication initiator protein DnaA from Nitrobacter winogradskyi (strain ATCC 25391 / DSM 10237 / CIP 104748 / NCIMB 11846 / Nb-255).